The chain runs to 431 residues: Guanine nucleotide exchange factor rei-2 (431 aa).

Residues 1–21 show a composition bias toward polar residues; the sequence is MDETATSSEVTETFVSDPTTR. Residues 1 to 28 are disordered; that stretch reads MDETATSSEVTETFVSDPTTRQFEEDGH. Coiled coils occupy residues 149 to 171 and 214 to 247; these read EVLN…AESL and LEAQ…RISE. Residues 249–298 are disordered; it reads IHEERSTGSLESAVSSDQEDQKSDFKSSESLPGNPPPYAPTAPPPYEDKY. A compositionally biased stretch (polar residues) spans 255–264; sequence TGSLESAVSS. Pro residues predominate over residues 281–293; it reads GNPPPYAPTAPPP.

This sequence belongs to the SH3BP5 family. As to quaternary structure, interacts with rab-11.1. Binds preferentially to the GDP-bound form of rab-11.1.

Functionally, guanine nucleotide exchange factor for Rab GTPase Rab-11.1. May spatially and temporally regulate the distribution of Rab-11.1 to target membranes during embryogenesis. May play a role in cytokinesis, probably by targeting rab-11.1 to the cleavage furrows. This is Guanine nucleotide exchange factor rei-2 from Caenorhabditis elegans.